The following is a 351-amino-acid chain: DNA polymerase IV (351 aa).

The region spanning 4–184 is the UmuC domain; the sequence is FIHIDMDCFY…LPLGKIPGVG (181 aa). D8 and D102 together coordinate Mg(2+). The active site involves E103.

This sequence belongs to the DNA polymerase type-Y family. Monomer. Mg(2+) serves as cofactor.

It is found in the cytoplasm. The enzyme catalyses DNA(n) + a 2'-deoxyribonucleoside 5'-triphosphate = DNA(n+1) + diphosphate. Functionally, poorly processive, error-prone DNA polymerase involved in untargeted mutagenesis. Copies undamaged DNA at stalled replication forks, which arise in vivo from mismatched or misaligned primer ends. These misaligned primers can be extended by PolIV. Exhibits no 3'-5' exonuclease (proofreading) activity. May be involved in translesional synthesis, in conjunction with the beta clamp from PolIII. The sequence is that of DNA polymerase IV from Pseudoalteromonas translucida (strain TAC 125).